We begin with the raw amino-acid sequence, 338 residues long: Ketol-acid reductoisomerase (NADP(+)) (338 aa).

A KARI N-terminal Rossmann domain is found at 1–181 (MKVFYDKDAD…GGGRAGIIET (181 aa)). NADP(+) is bound by residues 24 to 27 (YGSQ), arginine 47, and serine 52. Residue histidine 107 is part of the active site. Glycine 133 contributes to the NADP(+) binding site. The KARI C-terminal knotted domain occupies 182 to 327 (NFREETETDL…AKLRAMMPWI (146 aa)). Aspartate 190, glutamate 194, glutamate 226, and glutamate 230 together coordinate Mg(2+). Position 251 (serine 251) interacts with substrate.

It belongs to the ketol-acid reductoisomerase family. Mg(2+) is required as a cofactor.

It carries out the reaction (2R)-2,3-dihydroxy-3-methylbutanoate + NADP(+) = (2S)-2-acetolactate + NADPH + H(+). The enzyme catalyses (2R,3R)-2,3-dihydroxy-3-methylpentanoate + NADP(+) = (S)-2-ethyl-2-hydroxy-3-oxobutanoate + NADPH + H(+). It functions in the pathway amino-acid biosynthesis; L-isoleucine biosynthesis; L-isoleucine from 2-oxobutanoate: step 2/4. The protein operates within amino-acid biosynthesis; L-valine biosynthesis; L-valine from pyruvate: step 2/4. In terms of biological role, involved in the biosynthesis of branched-chain amino acids (BCAA). Catalyzes an alkyl-migration followed by a ketol-acid reduction of (S)-2-acetolactate (S2AL) to yield (R)-2,3-dihydroxy-isovalerate. In the isomerase reaction, S2AL is rearranged via a Mg-dependent methyl migration to produce 3-hydroxy-3-methyl-2-ketobutyrate (HMKB). In the reductase reaction, this 2-ketoacid undergoes a metal-dependent reduction by NADPH to yield (R)-2,3-dihydroxy-isovalerate. This is Ketol-acid reductoisomerase (NADP(+)) from Ralstonia pickettii (strain 12J).